We begin with the raw amino-acid sequence, 312 residues long: DNA-directed RNA polymerase subunit alpha (312 aa).

Positions 1–226 (MIEFEKPNIT…EHLDIFVNLT (226 aa)) are alpha N-terminal domain (alpha-NTD). The tract at residues 243–312 (KEKMLEMTIE…DLGLGLRKED (70 aa)) is alpha C-terminal domain (alpha-CTD).

The protein belongs to the RNA polymerase alpha chain family. As to quaternary structure, homodimer. The RNAP catalytic core consists of 2 alpha, 1 beta, 1 beta' and 1 omega subunit. When a sigma factor is associated with the core the holoenzyme is formed, which can initiate transcription.

The enzyme catalyses RNA(n) + a ribonucleoside 5'-triphosphate = RNA(n+1) + diphosphate. Functionally, DNA-dependent RNA polymerase catalyzes the transcription of DNA into RNA using the four ribonucleoside triphosphates as substrates. This is DNA-directed RNA polymerase subunit alpha from Lacticaseibacillus casei (strain BL23) (Lactobacillus casei).